The primary structure comprises 292 residues: Forkhead box protein R1 (292 aa).

2 disordered regions span residues Pro-31–Glu-50 and Pro-65–Gln-166. Composition is skewed to basic and acidic residues over residues Pro-35–Pro-47 and Val-70–Leu-79. Over residues Thr-80–Pro-89 the composition is skewed to polar residues. The span at Leu-129–Asp-140 shows a compositional bias: acidic residues. Basic residues predominate over residues Pro-149–Arg-161. Residues Arg-173–Arg-272 constitute a DNA-binding region (fork-head).

In terms of tissue distribution, expressed in testis (at protein level).

The protein resides in the nucleus. It localises to the cytoplasm. It is found in the perinuclear region. Transcription factor which acts as both an activator and a repressor. Activates transcription of a number of genes including the heat shock chaperones HSPA1A and HSPA6 and the antioxidant NADPH-dependent reductase DHRS2 which are involved in protection against oxidative stress. Required for normal brain development. This Homo sapiens (Human) protein is Forkhead box protein R1 (FOXR1).